We begin with the raw amino-acid sequence, 302 residues long: Elongation factor Ts (302 aa).

Residues 82–85 (TDFV) are involved in Mg(2+) ion dislocation from EF-Tu.

This sequence belongs to the EF-Ts family.

Its subcellular location is the cytoplasm. Associates with the EF-Tu.GDP complex and induces the exchange of GDP to GTP. It remains bound to the aminoacyl-tRNA.EF-Tu.GTP complex up to the GTP hydrolysis stage on the ribosome. The polypeptide is Elongation factor Ts (Nitrosospira multiformis (strain ATCC 25196 / NCIMB 11849 / C 71)).